A 768-amino-acid chain; its full sequence is C-type polyheme cytochrome OmcC (768 aa).

A signal peptide spans 1–23 (MSRKVTKYSAVLAVSLFAAALAG). The N-palmitoyl cysteine moiety is linked to residue cysteine 24. Residue cysteine 24 is the site of S-diacylglycerol cysteine attachment. Heme c is bound by residues cysteine 48, cysteine 51, histidine 52, cysteine 80, cysteine 83, histidine 84, cysteine 112, cysteine 115, histidine 116, cysteine 148, cysteine 151, histidine 152, cysteine 193, cysteine 196, histidine 197, cysteine 238, cysteine 241, histidine 242, cysteine 320, cysteine 323, histidine 324, cysteine 405, cysteine 408, histidine 409, cysteine 454, cysteine 457, histidine 458, cysteine 504, cysteine 507, histidine 508, cysteine 579, cysteine 582, histidine 583, cysteine 611, cysteine 614, and histidine 615.

In terms of processing, binds 12 heme c groups per subunit.

It is found in the cell outer membrane. Functionally, not involved in Fe(3+) reduction. This chain is C-type polyheme cytochrome OmcC (omcC), found in Geobacter sulfurreducens (strain ATCC 51573 / DSM 12127 / PCA).